The primary structure comprises 384 residues: Carbamoyl phosphate synthase small chain (384 aa).

Positions 1-193 are CPSase; the sequence is MTKPATTPAI…DSHPEIPASE (193 aa). L-glutamine-binding residues include serine 51, glycine 245, and glycine 247. Residues 197-384 form the Glutamine amidotransferase type-1 domain; that stretch reads HVVAYDYGVK…ISAMAPVVDR (188 aa). The active-site Nucleophile is cysteine 273. Leucine 274, glutamine 277, asparagine 315, glycine 317, and phenylalanine 318 together coordinate L-glutamine. Active-site residues include histidine 357 and glutamate 359.

Belongs to the CarA family. Composed of two chains; the small (or glutamine) chain promotes the hydrolysis of glutamine to ammonia, which is used by the large (or ammonia) chain to synthesize carbamoyl phosphate. Tetramer of heterodimers (alpha,beta)4.

It carries out the reaction hydrogencarbonate + L-glutamine + 2 ATP + H2O = carbamoyl phosphate + L-glutamate + 2 ADP + phosphate + 2 H(+). The enzyme catalyses L-glutamine + H2O = L-glutamate + NH4(+). Its pathway is amino-acid biosynthesis; L-arginine biosynthesis; carbamoyl phosphate from bicarbonate: step 1/1. The protein operates within pyrimidine metabolism; UMP biosynthesis via de novo pathway; (S)-dihydroorotate from bicarbonate: step 1/3. In terms of biological role, small subunit of the glutamine-dependent carbamoyl phosphate synthetase (CPSase). CPSase catalyzes the formation of carbamoyl phosphate from the ammonia moiety of glutamine, carbonate, and phosphate donated by ATP, constituting the first step of 2 biosynthetic pathways, one leading to arginine and/or urea and the other to pyrimidine nucleotides. The small subunit (glutamine amidotransferase) binds and cleaves glutamine to supply the large subunit with the substrate ammonia. The chain is Carbamoyl phosphate synthase small chain from Stutzerimonas stutzeri (Pseudomonas stutzeri).